We begin with the raw amino-acid sequence, 246 residues long: Ribonuclease PH (246 aa).

Phosphate contacts are provided by residues arginine 91 and 129 to 131 (GTR).

Belongs to the RNase PH family. Homohexameric ring arranged as a trimer of dimers.

It carries out the reaction tRNA(n+1) + phosphate = tRNA(n) + a ribonucleoside 5'-diphosphate. Its function is as follows. Phosphorolytic 3'-5' exoribonuclease that plays an important role in tRNA 3'-end maturation. Removes nucleotide residues following the 3'-CCA terminus of tRNAs; can also add nucleotides to the ends of RNA molecules by using nucleoside diphosphates as substrates, but this may not be physiologically important. Probably plays a role in initiation of 16S rRNA degradation (leading to ribosome degradation) during starvation. The polypeptide is Ribonuclease PH (Burkholderia cenocepacia (strain ATCC BAA-245 / DSM 16553 / LMG 16656 / NCTC 13227 / J2315 / CF5610) (Burkholderia cepacia (strain J2315))).